Reading from the N-terminus, the 268-residue chain is Acyl-CoA-binding domain-containing protein 4 (268 aa).

Residues 12–101 (CQKQFQAAVS…MKLVAQKVID (90 aa)) form the ACB domain. Residues 23 to 32 (IQNLPKNGSY), 43 to 47 (YSYYK), Lys-69, and Tyr-88 each bind an acyl-CoA. The tract at residues 151–175 (AVSEPPCLPKEPAPPSPESHSPRDL) is disordered. The segment covering 156 to 167 (PCLPKEPAPPSP) has biased composition (pro residues). Residues Ser-166 and Ser-171 each carry the phosphoserine modification.

Its function is as follows. Binds medium- and long-chain acyl-CoA esters and may function as an intracellular carrier of acyl-CoA esters. This is Acyl-CoA-binding domain-containing protein 4 (ACBD4) from Homo sapiens (Human).